The sequence spans 137 residues: Oleosin Ara h 11.0101 (137 aa).

Position 2 is an N-acetylalanine; alternate (Ala-2). The next 2 membrane-spanning stretches (helical) occupy residues 27–47 and 55–75; these read AVVAGGSLLILAGLVLAGTVI and LFVIFSPVLVPAVITVALLGL.

Belongs to the oleosin family. Expressed in seeds (at protein level).

The protein localises to the lipid droplet. Its subcellular location is the membrane. Functionally, may have a structural role to stabilize the lipid body during desiccation of the seed by preventing coalescence of the oil. Probably interacts with both lipid and phospholipid moieties of lipid bodies. May also provide recognition signals for specific lipase anchorage in lipolysis during seedling growth. In Arachis hypogaea (Peanut), this protein is Oleosin Ara h 11.0101.